The chain runs to 460 residues: Acetyl-coenzyme A carboxylase carboxyl transferase subunit beta, chloroplastic (460 aa).

Residues 179–460 form the CoA carboxyltransferase N-terminal domain; it reads LWVQCESCYG…GFFPLTQNGN (282 aa). Residues Cys-183, Cys-186, Cys-202, and Cys-205 each contribute to the Zn(2+) site. The segment at 183-205 adopts a C4-type zinc-finger fold; it reads CESCYGLNYKKFFKSKMNICEHC.

Belongs to the AccD/PCCB family. As to quaternary structure, acetyl-CoA carboxylase is a heterohexamer composed of biotin carboxyl carrier protein, biotin carboxylase and 2 subunits each of ACCase subunit alpha and ACCase plastid-coded subunit beta (accD). The cofactor is Zn(2+).

It is found in the plastid. The protein localises to the chloroplast stroma. It carries out the reaction N(6)-carboxybiotinyl-L-lysyl-[protein] + acetyl-CoA = N(6)-biotinyl-L-lysyl-[protein] + malonyl-CoA. The protein operates within lipid metabolism; malonyl-CoA biosynthesis; malonyl-CoA from acetyl-CoA: step 1/1. Component of the acetyl coenzyme A carboxylase (ACC) complex. Biotin carboxylase (BC) catalyzes the carboxylation of biotin on its carrier protein (BCCP) and then the CO(2) group is transferred by the transcarboxylase to acetyl-CoA to form malonyl-CoA. The polypeptide is Acetyl-coenzyme A carboxylase carboxyl transferase subunit beta, chloroplastic (Cicer arietinum (Chickpea)).